A 208-amino-acid polypeptide reads, in one-letter code: Small ribosomal subunit protein uS4 (208 aa).

The tract at residues Tyr-28–Ser-48 is disordered. In terms of domain architecture, S4 RNA-binding spans Met-95–Ala-159.

Belongs to the universal ribosomal protein uS4 family. As to quaternary structure, part of the 30S ribosomal subunit. Contacts protein S5. The interaction surface between S4 and S5 is involved in control of translational fidelity.

Its function is as follows. One of the primary rRNA binding proteins, it binds directly to 16S rRNA where it nucleates assembly of the body of the 30S subunit. In terms of biological role, with S5 and S12 plays an important role in translational accuracy. In Beutenbergia cavernae (strain ATCC BAA-8 / DSM 12333 / CCUG 43141 / JCM 11478 / NBRC 16432 / NCIMB 13614 / HKI 0122), this protein is Small ribosomal subunit protein uS4.